We begin with the raw amino-acid sequence, 322 residues long: Cysteine protease YopT (322 aa).

Active-site residues include Cys-139, His-258, and Asp-274.

Belongs to the peptidase C58 family. As to quaternary structure, interacts with human ARHA.

The protein localises to the secreted. Its function is as follows. Cysteine protease, which is translocated into infected cells and plays a central role in pathogenesis by cleaving the C-terminus end of the human small GTPase RhoA/ARHA, a regulator of cytoskeleton. Once cleaved, ARHA loses its lipid modification, and is released from the cell membrane, leading to the subsequent disruption of actin cytoskeleton of the host cell. The protein is Cysteine protease YopT (yopT) of Yersinia pseudotuberculosis serotype I (strain IP32953).